Here is a 715-residue protein sequence, read N- to C-terminus: 1,4-alpha-glucan branching enzyme GlgB (715 aa).

Catalysis depends on D396, which acts as the Nucleophile. The active-site Proton donor is the E449.

The protein belongs to the glycosyl hydrolase 13 family. GlgB subfamily. Monomer.

It carries out the reaction Transfers a segment of a (1-&gt;4)-alpha-D-glucan chain to a primary hydroxy group in a similar glucan chain.. It functions in the pathway glycan biosynthesis; glycogen biosynthesis. Catalyzes the formation of the alpha-1,6-glucosidic linkages in glycogen by scission of a 1,4-alpha-linked oligosaccharide from growing alpha-1,4-glucan chains and the subsequent attachment of the oligosaccharide to the alpha-1,6 position. The polypeptide is 1,4-alpha-glucan branching enzyme GlgB (Vibrio vulnificus (strain CMCP6)).